A 402-amino-acid polypeptide reads, in one-letter code: Argininosuccinate synthase (402 aa).

Residues 10–18 and Ala-38 each bind ATP; that span reads AYSGGVDTS. Tyr-89 contacts L-citrulline. Gly-119 is a binding site for ATP. 3 residues coordinate L-aspartate: Thr-121, Asn-125, and Asp-126. Position 125 (Asn-125) interacts with L-citrulline. L-citrulline is bound by residues Arg-129, Ser-177, Ser-186, Glu-262, and Tyr-274.

The protein belongs to the argininosuccinate synthase family. Type 1 subfamily. As to quaternary structure, homotetramer.

Its subcellular location is the cytoplasm. The enzyme catalyses L-citrulline + L-aspartate + ATP = 2-(N(omega)-L-arginino)succinate + AMP + diphosphate + H(+). It participates in amino-acid biosynthesis; L-arginine biosynthesis; L-arginine from L-ornithine and carbamoyl phosphate: step 2/3. This Prochlorococcus marinus (strain SARG / CCMP1375 / SS120) protein is Argininosuccinate synthase.